The primary structure comprises 294 residues: Glutamate-binding protein GluB (294 aa).

An N-terminal signal peptide occupies residues 1-26 (MSHKRMFTRLAAATSAAVLAGITLTA). Residue cysteine 27 is the site of N-palmitoyl cysteine attachment. Cysteine 27 carries S-diacylglycerol cysteine lipidation.

It belongs to the bacterial solute-binding protein 3 family. As to quaternary structure, the complex is composed of two ATP-binding proteins (GluA), two transmembrane proteins (GluC and GluD) and a solute-binding protein (GluB).

It localises to the cell membrane. Its function is as follows. Part of the ABC transporter complex GluABCD involved in glutamate uptake. Binds glutamate with a high affinity. This chain is Glutamate-binding protein GluB, found in Corynebacterium efficiens (strain DSM 44549 / YS-314 / AJ 12310 / JCM 11189 / NBRC 100395).